The chain runs to 149 residues: Putative pre-16S rRNA nuclease (149 aa).

It belongs to the YqgF nuclease family.

The protein resides in the cytoplasm. Could be a nuclease involved in processing of the 5'-end of pre-16S rRNA. The polypeptide is Putative pre-16S rRNA nuclease (Burkholderia lata (strain ATCC 17760 / DSM 23089 / LMG 22485 / NCIMB 9086 / R18194 / 383)).